We begin with the raw amino-acid sequence, 232 residues long: Orotate phosphoribosyltransferase (232 aa).

5-phospho-alpha-D-ribose 1-diphosphate is bound by residues Arg107, Lys108, Lys111, and 133–141 (EDLTTDGGS). Thr137 is an orotate binding site.

It belongs to the purine/pyrimidine phosphoribosyltransferase family. PyrE subfamily. Homodimer. It depends on Mg(2+) as a cofactor.

It catalyses the reaction orotidine 5'-phosphate + diphosphate = orotate + 5-phospho-alpha-D-ribose 1-diphosphate. The protein operates within pyrimidine metabolism; UMP biosynthesis via de novo pathway; UMP from orotate: step 1/2. Catalyzes the transfer of a ribosyl phosphate group from 5-phosphoribose 1-diphosphate to orotate, leading to the formation of orotidine monophosphate (OMP). The chain is Orotate phosphoribosyltransferase from Cereibacter sphaeroides (strain KD131 / KCTC 12085) (Rhodobacter sphaeroides).